The following is a 287-amino-acid chain: Bifunctional protein FolD (287 aa).

Residues 165–167, Ser190, and Ile231 contribute to the NADP(+) site; that span reads GRS.

The protein belongs to the tetrahydrofolate dehydrogenase/cyclohydrolase family. In terms of assembly, homodimer.

The enzyme catalyses (6R)-5,10-methylene-5,6,7,8-tetrahydrofolate + NADP(+) = (6R)-5,10-methenyltetrahydrofolate + NADPH. It catalyses the reaction (6R)-5,10-methenyltetrahydrofolate + H2O = (6R)-10-formyltetrahydrofolate + H(+). Its pathway is one-carbon metabolism; tetrahydrofolate interconversion. In terms of biological role, catalyzes the oxidation of 5,10-methylenetetrahydrofolate to 5,10-methenyltetrahydrofolate and then the hydrolysis of 5,10-methenyltetrahydrofolate to 10-formyltetrahydrofolate. The sequence is that of Bifunctional protein FolD from Carboxydothermus hydrogenoformans (strain ATCC BAA-161 / DSM 6008 / Z-2901).